Reading from the N-terminus, the 213-residue chain is U1 small nuclear ribonucleoprotein C (213 aa).

The Matrin-type zinc-finger motif lies at Tyr4–Ser36. Positions Ala143 to Val166 are enriched in pro residues. The segment at Ala143–His213 is disordered. A compositionally biased stretch (low complexity) spans Pro167–Ser180.

Belongs to the U1 small nuclear ribonucleoprotein C family. In terms of assembly, U1 snRNP is composed of the 7 core Sm proteins B/B', D1, D2, D3, E, F and G that assemble in a heptameric protein ring on the Sm site of the small nuclear RNA to form the core snRNP, and at least 3 U1 snRNP-specific proteins U1-70K, U1-A and U1-C. U1-C interacts with U1 snRNA and the 5' splice-site region of the pre-mRNA.

It localises to the nucleus. Functionally, component of the spliceosomal U1 snRNP, which is essential for recognition of the pre-mRNA 5' splice-site and the subsequent assembly of the spliceosome. U1-C is directly involved in initial 5' splice-site recognition for both constitutive and regulated alternative splicing. The interaction with the 5' splice-site seems to precede base-pairing between the pre-mRNA and the U1 snRNA. Stimulates commitment or early (E) complex formation by stabilizing the base pairing of the 5' end of the U1 snRNA and the 5' splice-site region. This is U1 small nuclear ribonucleoprotein C from Vitis vinifera (Grape).